Here is a 140-residue protein sequence, read N- to C-terminus: Nucleoside diphosphate kinase (140 aa).

K11, F59, R87, T93, R104, and N114 together coordinate ATP. H117 functions as the Pros-phosphohistidine intermediate in the catalytic mechanism.

It belongs to the NDK family. Homotetramer. The cofactor is Mg(2+).

It localises to the cytoplasm. It catalyses the reaction a 2'-deoxyribonucleoside 5'-diphosphate + ATP = a 2'-deoxyribonucleoside 5'-triphosphate + ADP. The enzyme catalyses a ribonucleoside 5'-diphosphate + ATP = a ribonucleoside 5'-triphosphate + ADP. Its function is as follows. Major role in the synthesis of nucleoside triphosphates other than ATP. The ATP gamma phosphate is transferred to the NDP beta phosphate via a ping-pong mechanism, using a phosphorylated active-site intermediate. This chain is Nucleoside diphosphate kinase, found in Rhizobium johnstonii (strain DSM 114642 / LMG 32736 / 3841) (Rhizobium leguminosarum bv. viciae).